The sequence spans 485 residues: Ribulose bisphosphate carboxylase large chain (485 aa).

Residues Asn-124 and Thr-174 each coordinate substrate. Catalysis depends on Lys-176, which acts as the Proton acceptor. Lys-178 provides a ligand contact to substrate. Mg(2+)-binding residues include Lys-202, Asp-204, and Glu-205. Lys-202 is subject to N6-carboxylysine. His-294 (proton acceptor) is an active-site residue. Substrate-binding residues include Arg-295, His-327, and Ser-379.

This sequence belongs to the RuBisCO large chain family. Type I subfamily. In terms of assembly, heterohexadecamer of 8 large chains and 8 small chains. The cofactor is Mg(2+).

It carries out the reaction 2 (2R)-3-phosphoglycerate + 2 H(+) = D-ribulose 1,5-bisphosphate + CO2 + H2O. The catalysed reaction is D-ribulose 1,5-bisphosphate + O2 = 2-phosphoglycolate + (2R)-3-phosphoglycerate + 2 H(+). In terms of biological role, ruBisCO catalyzes two reactions: the carboxylation of D-ribulose 1,5-bisphosphate, the primary event in carbon dioxide fixation, as well as the oxidative fragmentation of the pentose substrate. Both reactions occur simultaneously and in competition at the same active site. In Rhodopseudomonas palustris (strain BisA53), this protein is Ribulose bisphosphate carboxylase large chain.